The chain runs to 506 residues: Kynureninase 1 (506 aa).

Pyridoxal 5'-phosphate contacts are provided by residues leucine 141, threonine 142, 169–172, aspartate 254, histidine 257, and tyrosine 279; that span reads FPSD. Residue lysine 280 is modified to N6-(pyridoxal phosphate)lysine. Residues 303-319 show a composition bias toward low complexity; the sequence is ETAPTTTPDGTNGNPKT. The disordered stretch occupies residues 303-322; that stretch reads ETAPTTTPDGTNGNPKTISD. Tryptophan 334 and asparagine 362 together coordinate pyridoxal 5'-phosphate.

Belongs to the kynureninase family. Homodimer. Requires pyridoxal 5'-phosphate as cofactor.

The protein resides in the cytoplasm. The catalysed reaction is L-kynurenine + H2O = anthranilate + L-alanine + H(+). It catalyses the reaction 3-hydroxy-L-kynurenine + H2O = 3-hydroxyanthranilate + L-alanine + H(+). The protein operates within amino-acid degradation; L-kynurenine degradation; L-alanine and anthranilate from L-kynurenine: step 1/1. It participates in cofactor biosynthesis; NAD(+) biosynthesis; quinolinate from L-kynurenine: step 2/3. In terms of biological role, catalyzes the cleavage of L-kynurenine (L-Kyn) and L-3-hydroxykynurenine (L-3OHKyn) into anthranilic acid (AA) and 3-hydroxyanthranilic acid (3-OHAA), respectively. The polypeptide is Kynureninase 1 (Phaeosphaeria nodorum (strain SN15 / ATCC MYA-4574 / FGSC 10173) (Glume blotch fungus)).